The chain runs to 161 residues: Putative 4-hydroxy-4-methyl-2-oxoglutarate aldolase (161 aa).

Substrate-binding positions include 78–81 and Arg100; that span reads GDVI. Asp101 is an a divalent metal cation binding site.

This sequence belongs to the class II aldolase/RraA-like family. Homotrimer. It depends on a divalent metal cation as a cofactor.

It catalyses the reaction 4-hydroxy-4-methyl-2-oxoglutarate = 2 pyruvate. It carries out the reaction oxaloacetate + H(+) = pyruvate + CO2. Catalyzes the aldol cleavage of 4-hydroxy-4-methyl-2-oxoglutarate (HMG) into 2 molecules of pyruvate. Also contains a secondary oxaloacetate (OAA) decarboxylase activity due to the common pyruvate enolate transition state formed following C-C bond cleavage in the retro-aldol and decarboxylation reactions. The sequence is that of Putative 4-hydroxy-4-methyl-2-oxoglutarate aldolase from Mycobacterium avium (strain 104).